The sequence spans 276 residues: 28 kDa ribonucleoprotein, chloroplastic (276 aa).

Residues 1–57 (MATNGCLISLPPFFTTTKSISSYPFLSTQLKPISLSSSLPTLLSLNKRTTQFPTFVS) constitute a chloroplast transit peptide. RRM domains follow at residues 97 to 175 (AKLF…KAAP) and 191 to 269 (YRIY…AAEE).

The protein localises to the plastid. Its subcellular location is the chloroplast. Its function is as follows. Probably involved in the 3'-end processing of chloroplast mRNA's. The protein is 28 kDa ribonucleoprotein, chloroplastic of Nicotiana sylvestris (Wood tobacco).